A 308-amino-acid chain; its full sequence is Acetaldehyde dehydrogenase (308 aa).

T14–I17 contacts NAD(+). C129 acts as the Acyl-thioester intermediate in catalysis. NAD(+)-binding positions include S160 to N168 and N280.

Belongs to the acetaldehyde dehydrogenase family.

The catalysed reaction is acetaldehyde + NAD(+) + CoA = acetyl-CoA + NADH + H(+). The protein is Acetaldehyde dehydrogenase of Thermomicrobium roseum (strain ATCC 27502 / DSM 5159 / P-2).